A 337-amino-acid polypeptide reads, in one-letter code: Transmembrane protein 120B (337 aa).

Positions 1-39 (MSLERCQSEWTEIEQEYQQLQETHKVYRQKLEELTNLQA) form a coiled coil. Helical transmembrane passes span 100–122 (GLYLNLVLGNVNVTLLSNQAKFA), 130–150 (FKLYMTIILMFGAVTCLFLLN), 157–175 (IFNFLLVWYYCTLTIRESI), 185–205 (GWWVSHHYVSTFLSGVMLTWP), 268–288 (FLLPFLFFGHFWQLYNAVTLF), and 300–320 (QVFMLALTFLVLFLGNFLTTL).

The protein belongs to the TMEM120 family.

It localises to the nucleus inner membrane. Functionally, necessary for efficient adipogenesis. Does not show ion channel activity. This Danio rerio (Zebrafish) protein is Transmembrane protein 120B (tmem120b).